Here is a 149-residue protein sequence, read N- to C-terminus: Nucleoside diphosphate kinase (149 aa).

ATP contacts are provided by Lys-11, Phe-59, Arg-87, Thr-93, Arg-104, and Asn-114. Catalysis depends on His-117, which acts as the Pros-phosphohistidine intermediate.

This sequence belongs to the NDK family. Homotetramer. Requires Mg(2+) as cofactor.

Its subcellular location is the cytoplasm. It carries out the reaction a 2'-deoxyribonucleoside 5'-diphosphate + ATP = a 2'-deoxyribonucleoside 5'-triphosphate + ADP. It catalyses the reaction a ribonucleoside 5'-diphosphate + ATP = a ribonucleoside 5'-triphosphate + ADP. In terms of biological role, major role in the synthesis of nucleoside triphosphates other than ATP. The ATP gamma phosphate is transferred to the NDP beta phosphate via a ping-pong mechanism, using a phosphorylated active-site intermediate. This is Nucleoside diphosphate kinase from Treponema pallidum (strain Nichols).